The sequence spans 776 residues: MRQNYDDRKIVKQYREIARQIVKKEGLYKNMDQAELCEQTNFWREKFKTKPMTDRDKINIFALAREAASRIIGLDAVVVQLIGALVLGDGKVAEMKTGEGKTLMSLFVMFIEVMRGNRVHLVTANEYLARRDREEIGQVLEYLGVSVALNESGLDIAQKKAIYTADVIYGTASEFGFDYLRDNMVRQKEDKVQSGLDFVLIDEADSILIDEARTPLLISDRKEEDLSLYHTANKLVKKMMKDDYEMEEHKRFVWLNDAGIEKAQKFWGVESLYSAEAQSELRITMLLMRAHFLMHKDKDYVVLDDEVLIIDPHTGRALPGRRFNDGLHQAIEAKEGVEVKEESRTLATITIQNYFRMYKKISGMTGTAKTEEEEFRQIYNMDVVVIPTNLRVNREDMQDDIFYTKKEKGRAIVYEVSWRYEKGQPTLIGTSSIKSNEWISGLLDAAGIPHQVLNAKNHAQEAEIIAKAGKRGMVTLATNMAGRGTDIKLDPDVHKLGGLAVIGTERHESRRIDLQLMGRSGRRGDPGFSKFMISLEDDLLEQFESKSWEKLSTKLKRKAPRDGKPVNSRKIHAVVVDAQKRLEGANYDIRKDLLSYDEVIDLQRKMVYKERDLLLERNKLGVSSEKILREVAEYSFIHPSDIPEEELEIYYSRQKELLGGTKFPISFDQVTLMDPREVVEEIVSWHKKERNKFPAETIAAIEREVYLNLMDQMWVMHLDAMVQLREGIHLRAYGQQDPLVMYQKEGAQLFEKFQADYHFYFAHALLELDPDGLIQG.

Residues Q80, 98 to 102 (GEGKT), and D486 each bind ATP.

Belongs to the SecA family. In terms of assembly, monomer and homodimer. Part of the essential Sec protein translocation apparatus which comprises SecA, SecYEG and auxiliary proteins SecDF. Other proteins may also be involved.

Its subcellular location is the cell membrane. The protein localises to the cytoplasm. The catalysed reaction is ATP + H2O + cellular proteinSide 1 = ADP + phosphate + cellular proteinSide 2.. In terms of biological role, part of the Sec protein translocase complex. Interacts with the SecYEG preprotein conducting channel. Has a central role in coupling the hydrolysis of ATP to the transfer of proteins into and across the cell membrane, serving as an ATP-driven molecular motor driving the stepwise translocation of polypeptide chains across the membrane. This chain is Protein translocase subunit SecA 2, found in Listeria monocytogenes serotype 4b (strain F2365).